Consider the following 131-residue polypeptide: Small ribosomal subunit protein uS11 (131 aa).

The protein belongs to the universal ribosomal protein uS11 family. As to quaternary structure, part of the 30S ribosomal subunit. Interacts with proteins S7 and S18. Binds to IF-3.

Functionally, located on the platform of the 30S subunit, it bridges several disparate RNA helices of the 16S rRNA. Forms part of the Shine-Dalgarno cleft in the 70S ribosome. This is Small ribosomal subunit protein uS11 from Pelobacter propionicus (strain DSM 2379 / NBRC 103807 / OttBd1).